A 213-amino-acid chain; its full sequence is Dephospho-CoA kinase (213 aa).

Residues 3 to 202 enclose the DPCK domain; it reads RIGLTGGIGS…QSYLALADKH (200 aa). Residue 11 to 16 coordinates ATP; it reads GSGKTR.

This sequence belongs to the CoaE family.

The protein localises to the cytoplasm. It catalyses the reaction 3'-dephospho-CoA + ATP = ADP + CoA + H(+). It functions in the pathway cofactor biosynthesis; coenzyme A biosynthesis; CoA from (R)-pantothenate: step 5/5. Catalyzes the phosphorylation of the 3'-hydroxyl group of dephosphocoenzyme A to form coenzyme A. The polypeptide is Dephospho-CoA kinase (Bordetella avium (strain 197N)).